The primary structure comprises 505 residues: MFS efflux pump atnC (505 aa).

The next 12 membrane-spanning stretches (helical) occupy residues 48–68, 117–137, 148–168, 181–201, 216–236, 240–260, 304–324, 343–363, 377–399, 403–425, 439–459, and 469–489; these read VLQV…GLTV, LIGW…IPYG, VLLL…LVCW, LFQC…ATIA, LQAT…VLMA, WTPC…LIAL, VAGL…LDFL, LSLR…LLLF, LLIA…LSPT, AILV…ASLW, TVAI…SLMY, and WVGL…GVLL.

Belongs to the major facilitator superfamily.

Its subcellular location is the membrane. Its pathway is secondary metabolite biosynthesis. Functionally, MFS efflux pump; part of the gene cluster that mediates the biosynthesis of aspercryptins, linear lipopeptides built from six amino acids including 2 highly unusual and nonproteogenic amino acids, 2-amino-octanoic acid (2aoa) and 2-amino-dodecanol (2adol). This chain is MFS efflux pump atnC, found in Emericella nidulans (strain FGSC A4 / ATCC 38163 / CBS 112.46 / NRRL 194 / M139) (Aspergillus nidulans).